A 1217-amino-acid chain; its full sequence is DNA-directed RNA polymerase subunit beta' (1217 aa).

The Zn(2+) site is built by Cys60, Cys62, Cys75, and Cys78. Residues Asp449, Asp451, and Asp453 each coordinate Mg(2+). Residues Cys821, Cys895, Cys902, and Cys905 each coordinate Zn(2+).

This sequence belongs to the RNA polymerase beta' chain family. As to quaternary structure, the RNAP catalytic core consists of 2 alpha, 1 beta, 1 beta' and 1 omega subunit. When a sigma factor is associated with the core the holoenzyme is formed, which can initiate transcription. Requires Mg(2+) as cofactor. It depends on Zn(2+) as a cofactor.

The catalysed reaction is RNA(n) + a ribonucleoside 5'-triphosphate = RNA(n+1) + diphosphate. In terms of biological role, DNA-dependent RNA polymerase catalyzes the transcription of DNA into RNA using the four ribonucleoside triphosphates as substrates. The chain is DNA-directed RNA polymerase subunit beta' from Lactobacillus helveticus (strain DPC 4571).